The following is a 148-amino-acid chain: Macrodomain Ter protein (148 aa).

This sequence belongs to the MatP family. In terms of assembly, homodimer.

It localises to the cytoplasm. Functionally, required for spatial organization of the terminus region of the chromosome (Ter macrodomain) during the cell cycle. Prevents early segregation of duplicated Ter macrodomains during cell division. Binds specifically to matS, which is a 13 bp signature motif repeated within the Ter macrodomain. This is Macrodomain Ter protein from Haemophilus influenzae (strain 86-028NP).